The following is a 40-amino-acid chain: Photosystem II reaction center protein J (40 aa).

Residues 8 to 28 (IPLWLIGTVAGILVLGLLGIF) form a helical membrane-spanning segment.

It belongs to the PsbJ family. As to quaternary structure, PSII is composed of 1 copy each of membrane proteins PsbA, PsbB, PsbC, PsbD, PsbE, PsbF, PsbH, PsbI, PsbJ, PsbK, PsbL, PsbM, PsbT, PsbX, PsbY, PsbZ, Psb30/Ycf12, at least 3 peripheral proteins of the oxygen-evolving complex and a large number of cofactors. It forms dimeric complexes.

It is found in the plastid. It localises to the chloroplast thylakoid membrane. One of the components of the core complex of photosystem II (PSII). PSII is a light-driven water:plastoquinone oxidoreductase that uses light energy to abstract electrons from H(2)O, generating O(2) and a proton gradient subsequently used for ATP formation. It consists of a core antenna complex that captures photons, and an electron transfer chain that converts photonic excitation into a charge separation. The protein is Photosystem II reaction center protein J of Physcomitrium patens (Spreading-leaved earth moss).